Consider the following 421-residue polypeptide: MLKEEDKIFTNLHGQQSHDLKSSKKRGDWENTKALLDKGRDFIVEEVKKSGLRGRGGAGFSTGMKWSFMPKNSEKPCYLVVNADESEPGTCKDRDILRFEPHKLIEGCLLASFAIGANNCYIYIRGEFYNEASNIQRALDEAYKEGLIGKNACDSGFDCNIYLHRGAGAYICGEETALLESLEGKKGMPRLKPPFPAGFGLYGCPTTINNVESIAVVPTILRRGASWFAGIGKPNNTGTKIFCISGHVNKPCNVEEAMGISLKELIEKYAGGVRGGWDNLKAIIPGGSSVPLLPKLLCEVEMDFDSLRTAGSGLGTGGIIVMDKSTDIIYAIARLSKFYMHESCGQCTPCREGTGWMWRVMMRLVKGNAKKSEIDELLNVTKEIEGHTICALGDAAAWPIQGLIRHFRSEIEARIKSYSVV.

The interval 1-25 (MLKEEDKIFTNLHGQQSHDLKSSKK) is disordered. Over residues 16–25 (QSHDLKSSKK) the composition is skewed to basic and acidic residues. 54–63 (GRGGAGFSTG) is a binding site for NAD(+). 166–213 (GAGAYICGEETALLESLEGKKGMPRLKPPFPAGFGLYGCPTTINNVES) serves as a coordination point for FMN. Cysteine 344, cysteine 347, cysteine 350, and cysteine 390 together coordinate [4Fe-4S] cluster.

It belongs to the complex I 51 kDa subunit family. It depends on FMN as a cofactor. Requires [4Fe-4S] cluster as cofactor.

It carries out the reaction a quinone + NADH + 5 H(+)(in) = a quinol + NAD(+) + 4 H(+)(out). Functionally, NDH-1 shuttles electrons from NADH, via FMN and iron-sulfur (Fe-S) centers, to quinones in the respiratory chain. Couples the redox reaction to proton translocation (for every two electrons transferred, four hydrogen ions are translocated across the cytoplasmic membrane), and thus conserves the redox energy in a proton gradient. The chain is NADH-quinone oxidoreductase subunit F (nuoF) from Rickettsia massiliae (strain Mtu5).